Consider the following 498-residue polypeptide: MSDQSEYKISKDDEHSIYASEINKEKLQNTASPDVDYGDTASLKIDPKVEKKLLLKMDLVISPIIGFLYLMAFLDRSNIGNAAVAGMTEALSLYGERLNVAVSIFYVLYILVETPSVVLVKRIKASRMLAFISFAWSMTVLFSGFMSSYGGLIATRLILGLLEGCLFPALNLYLTTHYTRKEQCQRLSYLFASAGLAGAFGGLFAYALEQVHAGNKEGWQWIYIVEGLVSFIGVPLCLFALPDKMENAWFLTREEREVAIIRRDINARYHGEQHFEWSEVRKAFKDPKVYVSATSQFCADMVLYGFSSFLPVIIKGLGFVGLQTNYMTIPVYIAGVISFLFVAWLSDRTQLRAVYLISASTVVAVGYIIMLASDSNAAKYTATYIIAIGCYIGPGLNLGWLNNNVAGHYKRATAIGIQQTLANSSGIVAGQIYRSKNAPKYILGNAFTLGCVIVGGLAYVVMFFSLRYVNKKRDERCARGEFDPSAIGDFADDFRYYL.

11 helical membrane passes run 54 to 74 (LLKM…MAFL), 100 to 120 (VAVS…VVLV), 128 to 148 (MLAF…FMSS), 150 to 170 (GGLI…FPAL), 188 to 208 (SYLF…AYAL), 221 to 241 (WIYI…LFAL), 302 to 322 (VLYG…FVGL), 326 to 346 (YMTI…AWLS), 353 to 373 (AVYL…MLAS), 381 to 401 (TATY…LGWL), and 446 to 466 (AFTL…FFSL).

It belongs to the major facilitator superfamily. Allantoate permease family.

Its subcellular location is the membrane. This is an uncharacterized protein from Schizosaccharomyces pombe (strain 972 / ATCC 24843) (Fission yeast).